The following is a 429-amino-acid chain: Aspartate--tRNA(Asp/Asn) ligase (429 aa).

L-aspartate is bound at residue Glu167. The tract at residues 189 to 192 (QLYK) is aspartate. Arg210 is an L-aspartate binding site. ATP contacts are provided by residues 210 to 212 (RAE) and Glu352. Positions 352 and 355 each coordinate Mg(2+). The L-aspartate site is built by Ser355 and Arg359. 400–403 (GLAR) is a binding site for ATP.

The protein belongs to the class-II aminoacyl-tRNA synthetase family. Type 2 subfamily. As to quaternary structure, homodimer. Mg(2+) is required as a cofactor.

It localises to the cytoplasm. The enzyme catalyses tRNA(Asx) + L-aspartate + ATP = L-aspartyl-tRNA(Asx) + AMP + diphosphate. Its function is as follows. Aspartyl-tRNA synthetase with relaxed tRNA specificity since it is able to aspartylate not only its cognate tRNA(Asp) but also tRNA(Asn). Reaction proceeds in two steps: L-aspartate is first activated by ATP to form Asp-AMP and then transferred to the acceptor end of tRNA(Asp/Asn). This is Aspartate--tRNA(Asp/Asn) ligase from Sulfurisphaera tokodaii (strain DSM 16993 / JCM 10545 / NBRC 100140 / 7) (Sulfolobus tokodaii).